A 282-amino-acid polypeptide reads, in one-letter code: tRNA uridine(34) hydroxylase (282 aa).

The region spanning 128–222 is the Rhodanese domain; that stretch reads DGRPVVMLDT…YFEEVGGSHY (95 aa). Residue Cys182 is the Cysteine persulfide intermediate of the active site.

This sequence belongs to the TrhO family.

The catalysed reaction is uridine(34) in tRNA + AH2 + O2 = 5-hydroxyuridine(34) in tRNA + A + H2O. Functionally, catalyzes oxygen-dependent 5-hydroxyuridine (ho5U) modification at position 34 in tRNAs. This chain is tRNA uridine(34) hydroxylase, found in Cupriavidus metallidurans (strain ATCC 43123 / DSM 2839 / NBRC 102507 / CH34) (Ralstonia metallidurans).